The sequence spans 962 residues: Glycine dehydrogenase (decarboxylating) (962 aa).

Lysine 709 carries the post-translational modification N6-(pyridoxal phosphate)lysine.

This sequence belongs to the GcvP family. The glycine cleavage system is composed of four proteins: P, T, L and H. Pyridoxal 5'-phosphate is required as a cofactor.

It catalyses the reaction N(6)-[(R)-lipoyl]-L-lysyl-[glycine-cleavage complex H protein] + glycine + H(+) = N(6)-[(R)-S(8)-aminomethyldihydrolipoyl]-L-lysyl-[glycine-cleavage complex H protein] + CO2. Functionally, the glycine cleavage system catalyzes the degradation of glycine. The P protein binds the alpha-amino group of glycine through its pyridoxal phosphate cofactor; CO(2) is released and the remaining methylamine moiety is then transferred to the lipoamide cofactor of the H protein. The sequence is that of Glycine dehydrogenase (decarboxylating) from Shewanella sp. (strain MR-4).